A 260-amino-acid polypeptide reads, in one-letter code: DNA-directed RNA polymerase subunit Rpo3 (260 aa).

It belongs to the archaeal Rpo3/eukaryotic RPB3 RNA polymerase subunit family. As to quaternary structure, part of the RNA polymerase complex.

The protein localises to the cytoplasm. It catalyses the reaction RNA(n) + a ribonucleoside 5'-triphosphate = RNA(n+1) + diphosphate. In terms of biological role, DNA-dependent RNA polymerase (RNAP) catalyzes the transcription of DNA into RNA using the four ribonucleoside triphosphates as substrates. The sequence is that of DNA-directed RNA polymerase subunit Rpo3 from Pyrobaculum aerophilum (strain ATCC 51768 / DSM 7523 / JCM 9630 / CIP 104966 / NBRC 100827 / IM2).